We begin with the raw amino-acid sequence, 363 residues long: Glutamate 5-kinase (363 aa).

Lysine 6 provides a ligand contact to ATP. Residues serine 46, aspartate 133, and asparagine 145 each contribute to the substrate site. ATP contacts are provided by residues threonine 165–aspartate 166 and threonine 207–lysine 213. In terms of domain architecture, PUA spans threonine 271 to threonine 349.

This sequence belongs to the glutamate 5-kinase family.

The protein localises to the cytoplasm. The catalysed reaction is L-glutamate + ATP = L-glutamyl 5-phosphate + ADP. The protein operates within amino-acid biosynthesis; L-proline biosynthesis; L-glutamate 5-semialdehyde from L-glutamate: step 1/2. Functionally, catalyzes the transfer of a phosphate group to glutamate to form L-glutamate 5-phosphate. The sequence is that of Glutamate 5-kinase from Deinococcus geothermalis (strain DSM 11300 / CIP 105573 / AG-3a).